Here is a 1089-residue protein sequence, read N- to C-terminus: Platelet-derived growth factor receptor alpha (1089 aa).

The signal sequence occupies residues 1-24; the sequence is MGTSHQVFLVLSCLLTGPGLISCQ. Ig-like C2-type domains lie at 25–113, 117–201, 202–306, 319–410, and 414–517; these read LLLP…SEIE, IYIY…FKTS, EFNV…KRVT, PTFG…FELS, and PASI…LKLV. Residues 25 to 528 lie on the Extracellular side of the membrane; it reads LLLPSILPNE…PTLRSELTVA (504 aa). 5 N-linked (GlcNAc...) asparagine glycosylation sites follow: Asn42, Asn76, Asn89, Asn103, and Asn179. Cys49 and Cys100 are joined by a disulfide. 2 cysteine pairs are disulfide-bonded: Cys150/Cys189 and Cys235/Cys290. 5 N-linked (GlcNAc...) asparagine glycosylation sites follow: Asn353, Asn359, Asn458, Asn468, and Asn506. The cysteines at positions 435 and 501 are disulfide-linked. A helical transmembrane segment spans residues 529–549; it reads AAVLVLLVIVIVSLIVLVVIW. Topologically, residues 550 to 1089 are cytoplasmic; sequence KQKPRYEIRW…SSDLVEDSFL (540 aa). Tyr572 and Tyr574 each carry phosphotyrosine; by autocatalysis. The region spanning 593 to 954 is the Protein kinase domain; that stretch reads LVLGRILGSG…HLSEIVENLL (362 aa). Residues 599-607 and Lys627 contribute to the ATP site; that span reads LGSGAFGKV. Phosphotyrosine; by autocatalysis occurs at positions 720, 731, 742, 754, 762, and 768. Residue Asp818 is the Proton acceptor of the active site. Phosphotyrosine; by autocatalysis is present on residues Tyr849, Tyr988, and Tyr1018. The segment at 1018–1089 is disordered; that stretch reads YIIPLPDIDP…SSDLVEDSFL (72 aa). Polar residues predominate over residues 1041–1059; that stretch reads SSQTSEESAIETGSSSSTF. A compositionally biased stretch (acidic residues) spans 1065–1089; it reads ETIEDIDMMDDIGIDSSDLVEDSFL.

The protein belongs to the protein kinase superfamily. Tyr protein kinase family. CSF-1/PDGF receptor subfamily. As to quaternary structure, interacts with homodimeric PDGFA, PDGFB and PDGFC, and with heterodimers formed by PDGFA and PDGFB. Monomer in the absence of bound ligand. Interaction with dimeric PDGFA, PDGFB and/or PDGFC leads to receptor dimerization, where both PDGFRA homodimers and heterodimers with PDGFRB are observed. Interacts (tyrosine phosphorylated) with SHB (via SH2 domain). Interacts (tyrosine phosphorylated) with SHF (via SH2 domain). Interacts (tyrosine phosphorylated) with SRC (via SH2 domain). Interacts (tyrosine phosphorylated) with PIK3R1. Interacts (tyrosine phosphorylated) with PLCG1 (via SH2 domain). Interacts (tyrosine phosphorylated) with CRK, GRB2 and GRB7. Interacts with CD248; this interaction promotes PDGF receptor signaling pathway. Ubiquitinated, leading to its internalization and degradation. Post-translationally, autophosphorylated on tyrosine residues upon ligand binding. Autophosphorylation occurs in trans, i.e. one subunit of the dimeric receptor phosphorylates tyrosine residues on the other subunit. Phosphorylation at Tyr-731 and Tyr-742 is important for interaction with PIK3R1. Phosphorylation at Tyr-720 and Tyr-754 is important for interaction with PTPN11. Phosphorylation at Tyr-762 is important for interaction with CRK. Phosphorylation at Tyr-572 and Tyr-574 is important for interaction with SRC and SRC family members. Phosphorylation at Tyr-988 and Tyr-1018 is important for interaction with PLCG1. As to expression, focally expressed in cortical interstitial cells and highly expressed in the interstitium of the papillary region. Also expressed by adventitial cells in arterial vessels. Up-regulated in areas of renal fibrosis. In mice with unilateral ureteral obstruction, expression in cortical interstitial cells becomes prominent at day 4 which increases progressively until day 14.

The protein localises to the cell membrane. Its subcellular location is the cell projection. It is found in the cilium. It localises to the golgi apparatus. It carries out the reaction L-tyrosyl-[protein] + ATP = O-phospho-L-tyrosyl-[protein] + ADP + H(+). Its activity is regulated as follows. Present in an inactive conformation in the absence of bound ligand. Binding of PDGFA and/or PDGFB leads to dimerization and activation by autophosphorylation on tyrosine residues. Inhibited by imatinib, nilotinib and sorafenib. Its function is as follows. Tyrosine-protein kinase that acts as a cell-surface receptor for PDGFA, PDGFB and PDGFC and plays an essential role in the regulation of embryonic development, cell proliferation, survival and chemotaxis. Depending on the context, promotes or inhibits cell proliferation and cell migration. Plays an important role in the differentiation of bone marrow-derived mesenchymal stem cells. Required for normal skeleton development and cephalic closure during embryonic development. Required for normal development of the mucosa lining the gastrointestinal tract, and for recruitment of mesenchymal cells and normal development of intestinal villi. Plays a role in cell migration and chemotaxis in wound healing. Plays a role in platelet activation, secretion of agonists from platelet granules, and in thrombin-induced platelet aggregation. Binding of its cognate ligands - homodimeric PDGFA, homodimeric PDGFB, heterodimers formed by PDGFA and PDGFB or homodimeric PDGFC -leads to the activation of several signaling cascades; the response depends on the nature of the bound ligand and is modulated by the formation of heterodimers between PDGFRA and PDGFRB. Phosphorylates PIK3R1, PLCG1, and PTPN11. Activation of PLCG1 leads to the production of the cellular signaling molecules diacylglycerol and inositol 1,4,5-trisphosphate, mobilization of cytosolic Ca(2+) and the activation of protein kinase C. Phosphorylates PIK3R1, the regulatory subunit of phosphatidylinositol 3-kinase, and thereby mediates activation of the AKT1 signaling pathway. Mediates activation of HRAS and of the MAP kinases MAPK1/ERK2 and/or MAPK3/ERK1. Promotes activation of STAT family members STAT1, STAT3 and STAT5A and/or STAT5B. Receptor signaling is down-regulated by protein phosphatases that dephosphorylate the receptor and its down-stream effectors, and by rapid internalization of the activated receptor. This is Platelet-derived growth factor receptor alpha (Pdgfra) from Mus musculus (Mouse).